A 219-amino-acid chain; its full sequence is Orotidine 5'-phosphate decarboxylase (219 aa).

Substrate contacts are provided by residues Asp-10, Lys-32, 58 to 67 (DFKVADIPYT), Ser-113, 163 to 173 (PGIGAQGGDPY), Gly-186, and Arg-187. Catalysis depends on Lys-60, which acts as the Proton donor.

This sequence belongs to the OMP decarboxylase family. Type 1 subfamily. As to quaternary structure, homodimer.

It catalyses the reaction orotidine 5'-phosphate + H(+) = UMP + CO2. Its pathway is pyrimidine metabolism; UMP biosynthesis via de novo pathway; UMP from orotate: step 2/2. Functionally, catalyzes the decarboxylation of orotidine 5'-monophosphate (OMP) to uridine 5'-monophosphate (UMP). The polypeptide is Orotidine 5'-phosphate decarboxylase (Thermoplasma volcanium (strain ATCC 51530 / DSM 4299 / JCM 9571 / NBRC 15438 / GSS1)).